A 123-amino-acid chain; its full sequence is Sterol carrier protein 2 (123 aa).

The 98-residue stretch at 16-113 (KEHLSTDAGK…GSLSAAQKFT (98 aa)) folds into the SCP2 domain. Positions 121–123 (SKL) match the Microbody targeting signal motif.

In terms of tissue distribution, expressed in most tissues including seedlings, cotyledons, inflorescence, leaves, stems, roots, siliques and flower buds, with the highest levels in floral tissues and in maturing seeds.

Its subcellular location is the peroxisome. In terms of biological role, enhances the transfer of lipids between membranes in vitro. Active on phosphatidylcholine (PC), 1-palmitoyl 2-oleoyl phosphatidylcholine (POPC) and ergosterol, and, to a lower extent, dimyristoyl phosphatidic acid, stigmasterol, desmosterol, beta-sitosterol and steryl glucoside. Inactive or poorly active on palmitic acid, stearoyl-coenzyme A, cholesterol, glucosylceramide and ceramide. Required during seeds and seedlings development. The protein is Sterol carrier protein 2 of Arabidopsis thaliana (Mouse-ear cress).